The following is a 260-amino-acid chain: MTILSEIVKYKQSLLQNGYYQDKLNTLKSVKIQNKKSFINAIEKEPKLAIIAEIKSKSPTVNDLPERDLSQQISDYDQYGANAVSILTDEKYFGGSFERLQALTTKTTLPVLCKDFIIDPLQIDVAKQAGASMILLIVNILSDKQLKDLYNYAISQNLEVLVEVHDRHELERAYKVNAKLIGVNNRDLKRFVTNVEHTNTILENKKTNHYYISESGIHDASDVRKILHSGIDGLLIGEALMRCDNLSEFLPQLKMQKVKS.

This sequence belongs to the TrpC family.

The enzyme catalyses 1-(2-carboxyphenylamino)-1-deoxy-D-ribulose 5-phosphate + H(+) = (1S,2R)-1-C-(indol-3-yl)glycerol 3-phosphate + CO2 + H2O. It functions in the pathway amino-acid biosynthesis; L-tryptophan biosynthesis; L-tryptophan from chorismate: step 4/5. This is Indole-3-glycerol phosphate synthase from Staphylococcus aureus (strain MSSA476).